Here is an 890-residue protein sequence, read N- to C-terminus: ATP-dependent DNA helicase DDX11 (890 aa).

Residues Lys4–Leu424 enclose the Helicase ATP-binding domain. An ATP-binding site is contributed by Ser39–Ser46. Residues Leu71–Asn85 are compositionally biased toward basic and acidic residues. Disordered regions lie at residues Leu71 to Trp95 and Glu176 to Asp199. Positions 246, 264, 294, and 329 each coordinate [4Fe-4S] cluster. Residues Asp372–His375 carry the DEAH box motif.

Belongs to the DEAD box helicase family. DEAH subfamily. DDX11/CHL1 sub-subfamily. Requires [4Fe-4S] cluster as cofactor.

Its subcellular location is the nucleus. The protein localises to the nucleolus. The protein resides in the cytoplasm. It localises to the cytoskeleton. It is found in the spindle pole. Its subcellular location is the midbody. The protein localises to the microtubule organizing center. The protein resides in the centrosome. The enzyme catalyses Couples ATP hydrolysis with the unwinding of duplex DNA at the replication fork by translocating in the 5'-3' direction. This creates two antiparallel DNA single strands (ssDNA). The leading ssDNA polymer is the template for DNA polymerase III holoenzyme which synthesizes a continuous strand.. It catalyses the reaction ATP + H2O = ADP + phosphate + H(+). Its function is as follows. DNA-dependent ATPase and ATP-dependent DNA helicase that participates in various functions in genomic stability, including DNA replication, DNA repair and heterochromatin organization as well as in ribosomal RNA synthesis. Plays a role in DNA double-strand break (DSB) repair at the DNA replication fork during DNA replication recovery from DNA damage. Plays a role in the regulation of sister chromatid cohesion and mitotic chromosome segregation. Stimulates 5'-single-stranded DNA flap endonuclease activity of FEN1 in an ATP- and helicase-independent manner. Also plays a role in heterochromatin organization. Involved in rRNA transcription activation through binding to active hypomethylated rDNA gene loci by recruiting UBTF and the RNA polymerase Pol I transcriptional machinery. Plays a role in embryonic development. Associates with chromatin at DNA replication fork regions. Binds to single- and double-stranded DNAs. The sequence is that of ATP-dependent DNA helicase DDX11 from Danio rerio (Zebrafish).